We begin with the raw amino-acid sequence, 113 residues long: Con-Ins G3b (113 aa).

Residues 1-21 (MTTSFYFLLVALGLLLYVCQS) form the signal peptide. Positions 22–29 (SFGNQHTR) are excised as a propeptide. Pro34 bears the 4-hydroxyproline; partial mark. 3 disulfide bridges follow: Cys38/Cys99, Cys50/Cys112, and Cys98/Cys103. Glu41 carries the post-translational modification 4-carboxyglutamate. His51 is modified (histidine amide). Residues 52-92 (GKRNDAGKKRGRASPLWQRQGFLSMLKAKRNEAFFLQRDGR) constitute a propeptide, c peptide. A 4-carboxyglutamate modification is found at Glu96. 4-hydroxyproline; partial is present on Pro102.

It belongs to the insulin family. Heterodimer of A and B chains; disulfide-linked. It is noteworthy that in this dimer, in contrast to Con-Ins G1, the chain B is amidated and not the chain A. As to expression, expressed by the venom gland.

It localises to the secreted. Its function is as follows. This venom insulin, from a fish-hunting cone snail, facilitates prey capture by rapidly inducing hypoglycemic shock. It is one of the smallest known insulin found in nature and lacks the C-terminal segment of the B chain that, in human insulin, mediates engagement of the insulin receptor (INSR) and assembly of the hormone's hexameric storage form. Despite lacking this segment, it both binds and activates human insulin receptor (long isoform (HIR-B)) with only a 10-fold lower potency. In vivo, intraperitoneal injection of this peptide into zebrafish lowers blood glucose with the same potency than human insulin. In addition, when applied to water, this peptide reduces overall locomotor activity of zebrafish larvae, observed as a significant decrease in the percentage of time spent swimming and movement frequency. In Conus geographus (Geography cone), this protein is Con-Ins G3b.